A 1971-amino-acid polypeptide reads, in one-letter code: Germinal-center associated nuclear protein (1971 aa).

2 disordered regions span residues 1–50 (MHPV…KSLA) and 214–406 (PAFA…RGKS). Residues 8 to 29 (GGQQPSAFAVSSSTTGTYQTKS) show a composition bias toward polar residues. Arginine 32 is modified (asymmetric dimethylarginine). Positions 33 to 335 (FGQPSLFGQN…RPRGGTLFGR (303 aa)) are FG-repeats. 2 stretches are compositionally biased toward polar residues: residues 38 to 50 (LFGQ…KSLA) and 214 to 224 (PAFASPLSNQN). Over residues 232–253 (STSAFGSSNSSFSTFPTASPGS) the composition is skewed to low complexity. Basic and acidic residues-rich tracts occupy residues 288–321 (RKED…DKRP) and 342–359 (KSNK…KESG). The interval 414 to 550 (EEWIYSLGGV…AAGSLLSKSS (137 aa)) is DNA primase. Serine 424 carries the post-translational modification Phosphoserine. Lysine 483 and lysine 484 each carry N6-acetyllysine. Phosphoserine is present on residues serine 502, serine 531, and serine 550. Positions 768–951 (NNENMTKCLQ…RKSVFIGRKL (184 aa)) constitute a PCI domain. The stretch at 1124 to 1162 (HVAAEEVSMERQRLEEEKQRAEEERLKQERELMLTQLSE) forms a coiled coil. Positions 1793–1840 (RELQLSHGRSGMRSIHPPTSTFPTPLLHVHQKGKKKEESGREGSLSTE) are disordered.

Belongs to the SAC3 family. As to quaternary structure, component of the nuclear pore complex (NPC)-associated TREX-2 complex (transcription and export complex 2), composed of at least GANP, 2 copies of ENY2, PCID2, SEM1/DSS1, and either centrin CETN2 or centrin CETN3. The TREX-2 complex also associates with ALYREF/ALY. Interacts with RNA polymerase II subunit POLR2A and with the transcription elongation factor SUPT5H/SPT5. Interacts (via FG-repeats) with NXF1; this interaction is not mediated by RNA. Interacts with nuclear envelope proteins NUP62, NUP153 and RANBP2/NUP358; interaction with NUP153 is required for full localization at the nuclear pore complex. Interacts with several RNA helicases, including DHX9, DDX21, and DDX39A/DDX39, and with DNA topoisomerase TOP2A. Directly interacts with AICDA/AID. Interacts with the glucocorticoid receptor NR3C1. Interacts with MCM3. Post-translationally, phosphorylation at Ser-502 is induced in B-cells by CD40-stimulation, but not by bacterial lipopolysaccharide (LPS). Expressed at low levels in lymphoid organs, including thymus, spleen and lymph nodes. Up-regulated in stimulated B-cells in spleen and Peyer's patch germinal centers (at protein level).

It is found in the cytoplasm. It localises to the nucleus. Its subcellular location is the nucleus envelope. The protein resides in the nuclear pore complex. The protein localises to the nucleoplasm. It is found in the chromosome. It catalyses the reaction L-lysyl-[histone] + acetyl-CoA = N(6)-acetyl-L-lysyl-[histone] + CoA + H(+). In terms of biological role, as a component of the TREX-2 complex, involved in the export of mRNAs to the cytoplasm through the nuclear pores. Through the acetylation of histones, affects the assembly of nucleosomes at immunoglobulin variable region genes and promotes the recruitment and positioning of transcription complex to favor DNA cytosine deaminase AICDA/AID targeting, hence promoting somatic hypermutations. The polypeptide is Germinal-center associated nuclear protein (Mcm3ap) (Mus musculus (Mouse)).